Here is a 292-residue protein sequence, read N- to C-terminus: Glycine--tRNA ligase alpha subunit (292 aa).

This sequence belongs to the class-II aminoacyl-tRNA synthetase family. As to quaternary structure, tetramer of two alpha and two beta subunits.

It localises to the cytoplasm. The enzyme catalyses tRNA(Gly) + glycine + ATP = glycyl-tRNA(Gly) + AMP + diphosphate. This chain is Glycine--tRNA ligase alpha subunit, found in Pelotomaculum thermopropionicum (strain DSM 13744 / JCM 10971 / SI).